A 340-amino-acid polypeptide reads, in one-letter code: N-acetyl-gamma-glutamyl-phosphate reductase (340 aa).

Cys149 is an active-site residue.

It belongs to the NAGSA dehydrogenase family. Type 1 subfamily.

It is found in the cytoplasm. The enzyme catalyses N-acetyl-L-glutamate 5-semialdehyde + phosphate + NADP(+) = N-acetyl-L-glutamyl 5-phosphate + NADPH + H(+). It participates in amino-acid biosynthesis; L-arginine biosynthesis; N(2)-acetyl-L-ornithine from L-glutamate: step 3/4. Functionally, catalyzes the NADPH-dependent reduction of N-acetyl-5-glutamyl phosphate to yield N-acetyl-L-glutamate 5-semialdehyde. The chain is N-acetyl-gamma-glutamyl-phosphate reductase from Ruthia magnifica subsp. Calyptogena magnifica.